Reading from the N-terminus, the 55-residue chain is Large ribosomal subunit protein bL33 (55 aa).

It belongs to the bacterial ribosomal protein bL33 family.

This Erythrobacter litoralis (strain HTCC2594) protein is Large ribosomal subunit protein bL33.